A 220-amino-acid polypeptide reads, in one-letter code: MKTGIVTTLIALCLPVSVFATTLRLSTDVDLLVLDGKKVSSSLLRGADSIELDNGPHQLVFRVEKTIHLSNSEERLYISPPLVVSFNTQLINQVNFRLPRLENEREANHFDAAPHLELLDGDATPIPVKLDILAITSTAKTIDYEVEVERYNKSAKRASLPQFATMMADDSTLLSGVSELDAIPPQSQVLTEQRLKYWFKLADPQTRNTFLQWAEKQPSS.

A signal peptide spans 1-20; sequence MKTGIVTTLIALCLPVSVFA.

This sequence belongs to the UPF0319 family.

The polypeptide is UPF0319 protein YccT (Escherichia coli (strain 55989 / EAEC)).